The sequence spans 331 residues: CRISPR-associated endonuclease Cas1 (331 aa).

Residues Glu-166, His-228, and Asp-243 each coordinate Mn(2+).

The protein belongs to the CRISPR-associated endonuclease Cas1 family. As to quaternary structure, homodimer, forms a heterotetramer with a Cas2 homodimer. Requires Mg(2+) as cofactor. It depends on Mn(2+) as a cofactor.

In terms of biological role, CRISPR (clustered regularly interspaced short palindromic repeat), is an adaptive immune system that provides protection against mobile genetic elements (viruses, transposable elements and conjugative plasmids). CRISPR clusters contain spacers, sequences complementary to antecedent mobile elements, and target invading nucleic acids. CRISPR clusters are transcribed and processed into CRISPR RNA (crRNA). Acts as a dsDNA endonuclease. Involved in the integration of spacer DNA into the CRISPR cassette. This chain is CRISPR-associated endonuclease Cas1, found in Hyperthermus butylicus (strain DSM 5456 / JCM 9403 / PLM1-5).